The chain runs to 230 residues: Large ribosomal subunit protein uL1 (230 aa).

This sequence belongs to the universal ribosomal protein uL1 family. Part of the 50S ribosomal subunit.

Binds directly to 23S rRNA. The L1 stalk is quite mobile in the ribosome, and is involved in E site tRNA release. In terms of biological role, protein L1 is also a translational repressor protein, it controls the translation of the L11 operon by binding to its mRNA. In Limosilactobacillus reuteri subsp. reuteri (strain JCM 1112) (Lactobacillus reuteri), this protein is Large ribosomal subunit protein uL1.